Consider the following 293-residue polypeptide: Ribosomal protein L11 methyltransferase (293 aa).

Residues Thr145, Gly166, Asp188, and Asn230 each coordinate S-adenosyl-L-methionine.

The protein belongs to the methyltransferase superfamily. PrmA family.

It localises to the cytoplasm. The catalysed reaction is L-lysyl-[protein] + 3 S-adenosyl-L-methionine = N(6),N(6),N(6)-trimethyl-L-lysyl-[protein] + 3 S-adenosyl-L-homocysteine + 3 H(+). Methylates ribosomal protein L11. The polypeptide is Ribosomal protein L11 methyltransferase (Actinobacillus pleuropneumoniae serotype 7 (strain AP76)).